The primary structure comprises 265 residues: S-adenosylmethionine decarboxylase proenzyme (265 aa).

Residue Ser-114 is the Schiff-base intermediate with substrate; via pyruvic acid of the active site. Residue Ser-114 is modified to Pyruvic acid (Ser); by autocatalysis. His-119 acts as the Proton acceptor; for processing activity in catalysis. Cys-142 functions as the Proton donor; for catalytic activity in the catalytic mechanism.

The protein belongs to the prokaryotic AdoMetDC family. Type 2 subfamily. Heterooctamer of four alpha and four beta chains arranged as a tetramer of alpha/beta heterodimers. Pyruvate serves as cofactor. Is synthesized initially as an inactive proenzyme. Formation of the active enzyme involves a self-maturation process in which the active site pyruvoyl group is generated from an internal serine residue via an autocatalytic post-translational modification. Two non-identical subunits are generated from the proenzyme in this reaction, and the pyruvate is formed at the N-terminus of the alpha chain, which is derived from the carboxyl end of the proenzyme. The post-translation cleavage follows an unusual pathway, termed non-hydrolytic serinolysis, in which the side chain hydroxyl group of the serine supplies its oxygen atom to form the C-terminus of the beta chain, while the remainder of the serine residue undergoes an oxidative deamination to produce ammonia and the pyruvoyl group blocking the N-terminus of the alpha chain.

It carries out the reaction S-adenosyl-L-methionine + H(+) = S-adenosyl 3-(methylsulfanyl)propylamine + CO2. The protein operates within amine and polyamine biosynthesis; S-adenosylmethioninamine biosynthesis; S-adenosylmethioninamine from S-adenosyl-L-methionine: step 1/1. Catalyzes the decarboxylation of S-adenosylmethionine to S-adenosylmethioninamine (dcAdoMet), the propylamine donor required for the synthesis of the polyamines spermine and spermidine from the diamine putrescine. This chain is S-adenosylmethionine decarboxylase proenzyme, found in Buchnera aphidicola subsp. Acyrthosiphon pisum (strain 5A).